The sequence spans 111 residues: Prostate and testis expressed protein 2 (111 aa).

The first 18 residues, 1 to 18 (MFVLVMICLFCQYWGVLN), serve as a signal peptide directing secretion. The UPAR/Ly6 domain occupies 27 to 108 (LLCYKCKKYH…CKHSNYCNLP (82 aa)). Disulfide bonds link Cys29–Cys55, Cys32–Cys40, Cys47–Cys78, and Cys82–Cys99.

Belongs to the PATE family. As to expression, expressed in prostate, testis, brain and lung.

The protein localises to the secreted. The protein is Prostate and testis expressed protein 2 (Pate2) of Mus musculus (Mouse).